Consider the following 139-residue polypeptide: Histone H3-like 5 (139 aa).

A compositionally biased stretch (polar residues) spans 1–10; the sequence is MARTKQTARI. A disordered region spans residues 1–43; that stretch reads MARTKQTARISTGGKAPRKQLAPKAARQSAPATGGVKKPHRFR. Lys5 carries the post-translational modification N6,N6,N6-trimethyllysine; alternate. Lys5 is modified (N6,N6-dimethyllysine; alternate). Lys5 bears the N6-methyllysine; alternate mark. Ser11 is subject to Phosphoserine. A Phosphothreonine modification is found at Thr12. Residue Lys15 is modified to N6-acetyllysine. Residues Lys19 and Lys24 each carry the N6-methyllysine; alternate modification. An N6-acetyllysine; alternate mark is found at Lys19 and Lys24. Ser29 bears the Phosphoserine mark. N6,N6,N6-trimethyllysine; alternate is present on Lys37. An N6,N6-dimethyllysine; alternate modification is found at Lys37. An N6-methyllysine; alternate modification is found at Lys37.

This sequence belongs to the histone H3 family. The nucleosome is a histone octamer containing two molecules each of H2A, H2B, H3 and H4 assembled in one H3-H4 heterotetramer and two H2A-H2B heterodimers. The octamer wraps approximately 147 bp of DNA.

The protein localises to the nucleus. It localises to the chromosome. Its function is as follows. Core component of nucleosome. Nucleosomes wrap and compact DNA into chromatin, limiting DNA accessibility to the cellular machineries which require DNA as a template. Histones thereby play a central role in transcription regulation, DNA repair, DNA replication and chromosomal stability. DNA accessibility is regulated via a complex set of post-translational modifications of histones, also called histone code, and nucleosome remodeling. The polypeptide is Histone H3-like 5 (Arabidopsis thaliana (Mouse-ear cress)).